The chain runs to 495 residues: MSKEILLAAEAVSNEKLLPREKIFEALESAIAISTKKKFEYETDIRVSINPKTGEFDTFRRWLVVDEVKVPTKEITLEAAQFDDPNLQLGEYVEDQIESIAFDRIAMQTARQVISTKIREAERAKVVEQFREEEGKIVTGTVKKVSRDSIILDLGNKAEAMIAREDMLPRENFRPGDRVRGVLYKVNPEGKTAQLFVTRSKPEMLIELFRIEVPEIGEEMIEIRGAARDAGSRAKIAVKSNDKRIDPVGACVGMRGARVQVITNELGGERVDIVLWDDNPAQFVINAMAPADVSSIIVDEDNHSMDIAVEADNLAQAIGRNGQNVRLATQLTGWTLNVMTTDELNAKHQAEDNKVLNLFINALELDEEFAQILVEEGFTSLEEIAYVPMNELTAIDGLEDEDLVEELQTRAKNAITAAAVAEEEALKKANVEDRLLNLEGMNRHVAIKLAEKQITTLEELAEQGVDDLTDIEELTAEQAADLIMAARNICWFGEE.

Residues 135 to 200 (GKIVTGTVKK…KTAQLFVTRS (66 aa)) form the S1 motif domain. The KH domain maps to 302–374 (NHSMDIAVEA…LDEEFAQILV (73 aa)).

It belongs to the NusA family. In terms of assembly, monomer. Binds directly to the core enzyme of the DNA-dependent RNA polymerase and to nascent RNA.

It localises to the cytoplasm. Its function is as follows. Participates in both transcription termination and antitermination. In Haemophilus influenzae (strain ATCC 51907 / DSM 11121 / KW20 / Rd), this protein is Transcription termination/antitermination protein NusA.